The primary structure comprises 230 residues: Androgen-dependent TFPI-regulating protein (230 aa).

Topologically, residues 1–7 (MTKTTTC) are cytoplasmic. Residues 8 to 28 (LYHFVVLNWYIFLNYYIPQIG) form a helical membrane-spanning segment. At 29-45 (KDEEKLKEFHDGGRSKY) the chain is on the extracellular side. Residues 46–66 (LTLLNLLLQAVFFGVACLDDV) traverse the membrane as a helical segment. The Cytoplasmic portion of the chain corresponds to 67–85 (LKRVIGRKDIKFITYFRDL). The helical transmembrane segment at 86–106 (LFTTLAFPLSTFVFLVFWSLF) threads the bilayer. At 107–120 (HYDRSLVYPKGLDD) the chain is on the extracellular side. A helical transmembrane segment spans residues 121–141 (FFPAWVNHAMHTSIFPFSLAE). At 142–155 (TVLRPHNYPSKKLG) the chain is on the cytoplasmic side. A helical transmembrane segment spans residues 156 to 173 (LSLLGACNFAYIIRILWR). The Extracellular segment spans residues 174-190 (YVQTGNWVYPVFASLSP). Residues 191–211 (LGIILFFSASYILSASLYLFG) traverse the membrane as a helical segment. Over 212-230 (EKINHWKWGATVKPRMKKN) the chain is Cytoplasmic.

Belongs to the AIG1 family.

It is found in the cell membrane. It catalyses the reaction 9-hexadecanoyloxy-octadecanoate + H2O = 9-hydroxy-octadecanoate + hexadecanoate + H(+). It carries out the reaction 12-hexadecanoyloxy-octadecanoate + H2O = 12-hydroxyoctadecanoate + hexadecanoate + H(+). The catalysed reaction is 9-(9Z-hexadecenoyloxy)-octadecanoate + H2O = (9Z)-hexadecenoate + 9-hydroxy-octadecanoate + H(+). The enzyme catalyses 12-(9Z-hexadecenoyloxy)-octadecanoate + H2O = 12-hydroxyoctadecanoate + (9Z)-hexadecenoate + H(+). It catalyses the reaction 13-(9Z-hexadecenoyloxy)-octadecanoate + H2O = 13-hydroxy-octadecanoate + (9Z)-hexadecenoate + H(+). It carries out the reaction 9-octadecanoyloxy-octadecanoate + H2O = 9-hydroxy-octadecanoate + octadecanoate + H(+). The catalysed reaction is 12-octadecanoyloxy-octadecanoate + H2O = 12-hydroxyoctadecanoate + octadecanoate + H(+). The enzyme catalyses 13-octadecanoyloxy-octadecanoate + H2O = 13-hydroxy-octadecanoate + octadecanoate + H(+). It catalyses the reaction 9-(9Z-octadecenoyloxy)-octadecanoate + H2O = 9-hydroxy-octadecanoate + (9Z)-octadecenoate + H(+). It carries out the reaction 12-(9Z-octadecenoyloxy)-octadecanoate + H2O = 12-hydroxyoctadecanoate + (9Z)-octadecenoate + H(+). The catalysed reaction is 13-(9Z-octadecenoyloxy)-octadecanoate + H2O = 13-hydroxy-octadecanoate + (9Z)-octadecenoate + H(+). The enzyme catalyses 5-(9Z-octadecenoyloxy)-octadecanoate + H2O = 5-hydroxy-octadecanoate + (9Z)-octadecenoate + H(+). Functionally, hydrolyzes bioactive fatty-acid esters of hydroxy-fatty acids (FAHFAs), but not other major classes of lipids. Shows a preference for FAHFAs with branching distal from the carboxylate head group of the lipids. Regulates the expression and the cell-associated anticoagulant activity of the inhibitor TFPI in endothelial cells (in vitro). This is Androgen-dependent TFPI-regulating protein (Adtrp) from Rattus norvegicus (Rat).